A 352-amino-acid polypeptide reads, in one-letter code: Anthranilate phosphoribosyltransferase (352 aa).

Residues glycine 83, 86–87, threonine 91, 93–96, 111–119, and alanine 123 contribute to the 5-phospho-alpha-D-ribose 1-diphosphate site; these read GD, NIST, and KHGGRSVSS. Glycine 83 lines the anthranilate pocket. Residue serine 95 coordinates Mg(2+). Residue arginine 169 participates in anthranilate binding. 2 residues coordinate Mg(2+): aspartate 228 and glutamate 229.

It belongs to the anthranilate phosphoribosyltransferase family. Homodimer. The cofactor is Mg(2+).

The enzyme catalyses N-(5-phospho-beta-D-ribosyl)anthranilate + diphosphate = 5-phospho-alpha-D-ribose 1-diphosphate + anthranilate. The protein operates within amino-acid biosynthesis; L-tryptophan biosynthesis; L-tryptophan from chorismate: step 2/5. Its function is as follows. Catalyzes the transfer of the phosphoribosyl group of 5-phosphorylribose-1-pyrophosphate (PRPP) to anthranilate to yield N-(5'-phosphoribosyl)-anthranilate (PRA). The sequence is that of Anthranilate phosphoribosyltransferase from Neisseria meningitidis serogroup A / serotype 4A (strain DSM 15465 / Z2491).